The sequence spans 1727 residues: Nucleoporin alm1 (1727 aa).

7 coiled-coil regions span residues 57-361, 443-463, 542-740, 804-1106, 1223-1427, 1497-1555, and 1601-1664; these read QEVN…KNTS, NFLS…QAEL, IKEA…AEEL, AARK…INES, GERS…QLNK, NEEE…AESA, and QKEW…KKDS. Polar residues predominate over residues 1423 to 1448; the sequence is EQLNKPSATPTATTQSEPSTVSLEEF. 3 disordered regions span residues 1423–1459, 1477–1500, and 1656–1727; these read EQLN…SSTQ, EKVR…NEEE, and LEQS…KKAK. 2 stretches are compositionally biased toward polar residues: residues 1672–1684 and 1702–1714; these read ASKN…SNSE and VDTN…SSSD. At Ser-1706 the chain carries Phosphoserine.

The protein resides in the nucleus. It localises to the nuclear pore complex. The protein localises to the nucleus envelope. Functionally, maintains the proteasome and its anchor cut8 at the nucleus envelope and is required for kinetochore component proteostasis. Proper kinetochore stoichiometry ensures the correct attachment of kinetochores to spindle microtubules during cytokinesis. Required for the localization of spindle assembly checkpoint (SAC) protein mad2 and bub1 to the nucleus envelope during interphase, but not their localization during mitosis. The sequence is that of Nucleoporin alm1 from Schizosaccharomyces pombe (strain 972 / ATCC 24843) (Fission yeast).